Here is a 250-residue protein sequence, read N- to C-terminus: Bacteriorhodopsin-II (250 aa).

7 helical membrane passes run 14-34 (EGIWLALGTVGMLLGMVYFMA), 49-69 (VITILIAGIAASSYLSMFFGF), 89-109 (YADWLFTTPLLLLDIGLLAGA), 114-134 (MASLITIDAFMIVTGLAATLM), 142-162 (AFWTISTIAMLFVLYYLVVVV), 183-203 (IILVAWAIYPVAWLVGTEGLG), and 210-230 (ETLLFMILDLTAKIGFGFILL). The residue at position 222 (Lys222) is an N6-(retinylidene)lysine.

Belongs to the archaeal/bacterial/fungal opsin family. Post-translationally, the covalent binding of retinal to the apoprotein, bacterioopsin, generates bacteriorhodopsin.

It is found in the membrane. Light-driven proton pump. The sequence is that of Bacteriorhodopsin-II (xop1) from Haloarcula marismortui (strain ATCC 43049 / DSM 3752 / JCM 8966 / VKM B-1809) (Halobacterium marismortui).